Here is a 309-residue protein sequence, read N- to C-terminus: Olfactory receptor 1L8 (309 aa).

The Extracellular segment spans residues 1 to 26 (MERINHTSSVSEFILLGLSSRPEDQK). N5 is a glycosylation site (N-linked (GlcNAc...) asparagine). The helical transmembrane segment at 27-50 (TLFVLFLIVYLVTITGNLLIILAI) threads the bilayer. Over 51 to 58 (RFNPHLQT) the chain is Cytoplasmic. The chain crosses the membrane as a helical span at residues 59–80 (PMYFFLSFLSLTDICFTTSVVP). Over 81–101 (KMLMNFLSEKKTISYAGCLTQ) the chain is Extracellular. A disulfide bridge connects residues C98 and C190. Residues 102 to 121 (MYFLYALGNSDSCLLAVMAF) form a helical membrane-spanning segment. Over 122–140 (DRYVAVCDPFHYVTTMSHH) the chain is Cytoplasmic. Residues 141–159 (HCVLLVAFSCSFPHLHSLL) traverse the membrane as a helical segment. Residues 160–197 (HTLLLNRLTFCDSNVIHHFLCDLSPVLKLSCSSIFVNE) are Extracellular-facing. The helical transmembrane segment at 198–220 (IVQMTEAPIVLVTRFLCIAFSYI) threads the bilayer. The Cytoplasmic portion of the chain corresponds to 221–237 (RILTTVLKIPSTSGKRK). The helical transmembrane segment at 238 to 260 (AFSTCGFYLTVVTLFYGSIFCVY) threads the bilayer. Topologically, residues 261-272 (LQPPSTYAVKDH) are extracellular. The chain crosses the membrane as a helical span at residues 273–292 (VATIVYTVLSSMLNPFIYSL). Over 293–309 (RNKDLKQGLRKLMSKRS) the chain is Cytoplasmic.

The protein belongs to the G-protein coupled receptor 1 family.

The protein localises to the cell membrane. Functionally, odorant receptor. The sequence is that of Olfactory receptor 1L8 (OR1L8) from Homo sapiens (Human).